We begin with the raw amino-acid sequence, 193 residues long: Adenylate kinase (193 aa).

An ATP-binding site is contributed by 10–18; sequence GVPGVGGTT.

The protein belongs to the archaeal adenylate kinase family. As to quaternary structure, monomer.

It is found in the cytoplasm. The catalysed reaction is AMP + ATP = 2 ADP. The chain is Adenylate kinase from Methanococcus aeolicus (strain ATCC BAA-1280 / DSM 17508 / OCM 812 / Nankai-3).